Consider the following 505-residue polypeptide: MNILRMDILSRGGTQEIEHRDGFFNTSFQYVLSACLASFIFGYQVSVLNTIKSYIVVEFEWCSTKTDTSCEDSILKSSFLLASVFIGAVLGSGFSGYLVKFGRRFSLMVIYIFFIFVSILTAISHHFHTILYARLLSGFGIGLITVSVPMYISEMTHKDKKGAYGVLHQLFITFGIFVAVLLGLFLGDGPKINGKSIELSNFEMFWWRFMFFLPTIISLLGIILLIAFYKEETPYFLYENGNIEGSKNILKKIYGPSDVDDALRAIKDAIDQNKAAKESSLSLLSALKIPAYRNVIILGCILSGFQQFTGINVLVANSNELYKEFLDKNLITILSVIMTAVNFLMTFPAIYIIEKIGRKTLLLGGCIGVICAFLPTVIARQVWGPTKIVNGLSIAGTFLMIISFAVSYGPVLWIYLHEMYPSEIKDSAASLASLINWVCAIIVVFPSDIIIKKSPSILFMFFSVMCIIAFLFIMFFIKETKGGEIGTSPYISLEERQKHIGKSKV.

Residues 1–27 (MNILRMDILSRGGTQEIEHRDGFFNTS) lie on the Cytoplasmic side of the membrane. The chain crosses the membrane as a helical span at residues 28-48 (FQYVLSACLASFIFGYQVSVL). Topologically, residues 49 to 78 (NTIKSYIVVEFEWCSTKTDTSCEDSILKSS) are extracellular. Cysteines 62 and 70 form a disulfide. A helical transmembrane segment spans residues 79–99 (FLLASVFIGAVLGSGFSGYLV). Residues 100–104 (KFGRR) are Cytoplasmic-facing. Residues 105–125 (FSLMVIYIFFIFVSILTAISH) traverse the membrane as a helical segment. The Extracellular portion of the chain corresponds to 126 to 134 (HFHTILYAR). Residues 135 to 155 (LLSGFGIGLITVSVPMYISEM) form a helical membrane-spanning segment. Residues 156–165 (THKDKKGAYG) are Cytoplasmic-facing. A helical transmembrane segment spans residues 166-186 (VLHQLFITFGIFVAVLLGLFL). Gln169 lines the alpha-D-glucose pocket. Gln169 lines the beta-D-glucose pocket. Residues 187-208 (GDGPKINGKSIELSNFEMFWWR) lie on the Extracellular side of the membrane. Residues 209 to 229 (FMFFLPTIISLLGIILLIAFY) form a helical membrane-spanning segment. The Cytoplasmic portion of the chain corresponds to 230–294 (KEETPYFLYE…SALKIPAYRN (65 aa)). The helical transmembrane segment at 295–315 (VIILGCILSGFQQFTGINVLV) threads the bilayer. Alpha-D-glucose is bound by residues Gln306, Gln307, and Asn312. Gln306 is a binding site for beta-D-glucose. Asn312 contributes to the beta-D-glucose binding site. Topologically, residues 316–332 (ANSNELYKEFLDKNLIT) are extracellular. The chain crosses the membrane as a helical span at residues 333-353 (ILSVIMTAVNFLMTFPAIYII). Residue Asn342 participates in beta-D-glucose binding. Topologically, residues 354–358 (EKIGR) are cytoplasmic. Residues 359–379 (KTLLLGGCIGVICAFLPTVIA) form a helical membrane-spanning segment. The Extracellular portion of the chain corresponds to 380 to 393 (RQVWGPTKIVNGLS). Residues 394–414 (IAGTFLMIISFAVSYGPVLWI) form a helical membrane-spanning segment. Trp413 is a binding site for alpha-D-glucose. The Cytoplasmic segment spans residues 415–430 (YLHEMYPSEIKDSAAS). A helical transmembrane segment spans residues 431–451 (LASLINWVCAIIVVFPSDIII). The Extracellular portion of the chain corresponds to 452-456 (KKSPS). A helical membrane pass occupies residues 457 to 477 (ILFMFFSVMCIIAFLFIMFFI). Topologically, residues 478–505 (KETKGGEIGTSPYISLEERQKHIGKSKV) are cytoplasmic.

The protein belongs to the major facilitator superfamily. Sugar transporter (TC 2.A.1.1) family. As to quaternary structure, homodimer.

Its subcellular location is the cell membrane. The catalysed reaction is D-glucose(out) = D-glucose(in). It carries out the reaction D-fructose(out) = D-fructose(in). The enzyme catalyses D-galactose(in) = D-galactose(out). It catalyses the reaction D-mannose(out) = D-mannose(in). The catalysed reaction is D-glucosamine(out) = D-glucosamine(in). It carries out the reaction D-xylose(out) = D-xylose(in). Its activity is regulated as follows. Inhibited by cytochalasin B. Its function is as follows. Sodium-independent facilitative hexose transporter. Can transport D-glucose and D-fructose. Can transport D-mannose, D-galactose, D-xylose and D-glucosamine. In Plasmodium yoelii yoelii, this protein is Hexose transporter 1.